A 353-amino-acid chain; its full sequence is Holliday junction branch migration complex subunit RuvB (353 aa).

The disordered stretch occupies residues 1–25; the sequence is MDPGPAGDEVSLAPQQETAEQDVET. The tract at residues 1-188 is large ATPase domain (RuvB-L); that stretch reads MDPGPAGDEV…FGFTAHMEFY (188 aa). ATP-binding positions include Leu27, Arg28, Gly69, Lys72, Thr73, Ser74, 135–137, Arg178, Tyr188, and Arg225; that span reads EDY. Thr73 is a Mg(2+) binding site. The interval 189–259 is small ATPAse domain (RuvB-S); the sequence is EPAELELVVR…VARAALEVYD (71 aa). Residues 262 to 353 are head domain (RuvB-H); that stretch reads EHGLDRLDRA…ATRSLFADEV (92 aa). The DNA site is built by Arg317 and Arg322.

Belongs to the RuvB family. As to quaternary structure, homohexamer. Forms an RuvA(8)-RuvB(12)-Holliday junction (HJ) complex. HJ DNA is sandwiched between 2 RuvA tetramers; dsDNA enters through RuvA and exits via RuvB. An RuvB hexamer assembles on each DNA strand where it exits the tetramer. Each RuvB hexamer is contacted by two RuvA subunits (via domain III) on 2 adjacent RuvB subunits; this complex drives branch migration. In the full resolvosome a probable DNA-RuvA(4)-RuvB(12)-RuvC(2) complex forms which resolves the HJ.

It is found in the cytoplasm. It catalyses the reaction ATP + H2O = ADP + phosphate + H(+). Functionally, the RuvA-RuvB-RuvC complex processes Holliday junction (HJ) DNA during genetic recombination and DNA repair, while the RuvA-RuvB complex plays an important role in the rescue of blocked DNA replication forks via replication fork reversal (RFR). RuvA specifically binds to HJ cruciform DNA, conferring on it an open structure. The RuvB hexamer acts as an ATP-dependent pump, pulling dsDNA into and through the RuvAB complex. RuvB forms 2 homohexamers on either side of HJ DNA bound by 1 or 2 RuvA tetramers; 4 subunits per hexamer contact DNA at a time. Coordinated motions by a converter formed by DNA-disengaged RuvB subunits stimulates ATP hydrolysis and nucleotide exchange. Immobilization of the converter enables RuvB to convert the ATP-contained energy into a lever motion, pulling 2 nucleotides of DNA out of the RuvA tetramer per ATP hydrolyzed, thus driving DNA branch migration. The RuvB motors rotate together with the DNA substrate, which together with the progressing nucleotide cycle form the mechanistic basis for DNA recombination by continuous HJ branch migration. Branch migration allows RuvC to scan DNA until it finds its consensus sequence, where it cleaves and resolves cruciform DNA. The sequence is that of Holliday junction branch migration complex subunit RuvB from Saccharopolyspora erythraea (strain ATCC 11635 / DSM 40517 / JCM 4748 / NBRC 13426 / NCIMB 8594 / NRRL 2338).